The following is a 315-amino-acid chain: Methionyl-tRNA formyltransferase (315 aa).

113 to 116 (SLLP) lines the (6S)-5,6,7,8-tetrahydrofolate pocket.

This sequence belongs to the Fmt family.

The catalysed reaction is L-methionyl-tRNA(fMet) + (6R)-10-formyltetrahydrofolate = N-formyl-L-methionyl-tRNA(fMet) + (6S)-5,6,7,8-tetrahydrofolate + H(+). Attaches a formyl group to the free amino group of methionyl-tRNA(fMet). The formyl group appears to play a dual role in the initiator identity of N-formylmethionyl-tRNA by promoting its recognition by IF2 and preventing the misappropriation of this tRNA by the elongation apparatus. In Erwinia tasmaniensis (strain DSM 17950 / CFBP 7177 / CIP 109463 / NCPPB 4357 / Et1/99), this protein is Methionyl-tRNA formyltransferase.